Here is an 868-residue protein sequence, read N- to C-terminus: Leucine--tRNA ligase (868 aa).

Residues 42–52 (PYPSGKLHMGH) carry the 'HIGH' region motif. The 'KMSKS' region motif lies at 627-631 (KMSKS). Lys-630 is a binding site for ATP.

Belongs to the class-I aminoacyl-tRNA synthetase family.

The protein resides in the cytoplasm. It carries out the reaction tRNA(Leu) + L-leucine + ATP = L-leucyl-tRNA(Leu) + AMP + diphosphate. This Pseudomonas syringae pv. syringae (strain B728a) protein is Leucine--tRNA ligase.